The following is a 791-amino-acid chain: Valine--tRNA ligase (791 aa).

The short motif at 40-50 (PTVSGKMHMGH) is the 'HIGH' region element. Residues 521-525 (KMSKS) carry the 'KMSKS' region motif. Lys-524 serves as a coordination point for ATP.

Belongs to the class-I aminoacyl-tRNA synthetase family. ValS type 2 subfamily.

Its subcellular location is the cytoplasm. It catalyses the reaction tRNA(Val) + L-valine + ATP = L-valyl-tRNA(Val) + AMP + diphosphate. Its function is as follows. Catalyzes the attachment of valine to tRNA(Val). As ValRS can inadvertently accommodate and process structurally similar amino acids such as threonine, to avoid such errors, it has a 'posttransfer' editing activity that hydrolyzes mischarged Thr-tRNA(Val) in a tRNA-dependent manner. In Thermoplasma acidophilum (strain ATCC 25905 / DSM 1728 / JCM 9062 / NBRC 15155 / AMRC-C165), this protein is Valine--tRNA ligase.